Here is a 196-residue protein sequence, read N- to C-terminus: Proteasome subunit beta 1 (196 aa).

A propeptide spans 1–6 (MEKKTG) (removed in mature form; by autocatalysis). The active-site Nucleophile is Thr7.

Belongs to the peptidase T1B family. The 20S proteasome core is composed of 14 alpha and 14 beta subunits that assemble into four stacked heptameric rings, resulting in a barrel-shaped structure. The two inner rings, each composed of seven catalytic beta subunits, are sandwiched by two outer rings, each composed of seven alpha subunits. The catalytic chamber with the active sites is on the inside of the barrel. Has a gated structure, the ends of the cylinder being occluded by the N-termini of the alpha-subunits. Is capped at one or both ends by the proteasome regulatory ATPase, PAN.

The protein localises to the cytoplasm. The enzyme catalyses Cleavage of peptide bonds with very broad specificity.. With respect to regulation, the formation of the proteasomal ATPase PAN-20S proteasome complex, via the docking of the C-termini of PAN into the intersubunit pockets in the alpha-rings, triggers opening of the gate for substrate entry. Interconversion between the open-gate and close-gate conformations leads to a dynamic regulation of the 20S proteasome proteolysis activity. Functionally, component of the proteasome core, a large protease complex with broad specificity involved in protein degradation. The sequence is that of Proteasome subunit beta 1 from Pyrococcus furiosus (strain ATCC 43587 / DSM 3638 / JCM 8422 / Vc1).